A 310-amino-acid chain; its full sequence is Ornithine carbamoyltransferase (310 aa).

Residues 56-59 (STRT), glutamine 83, arginine 107, and 134-137 (HPCQ) each bind carbamoyl phosphate. Residues asparagine 165, aspartate 229, and 233 to 234 (SM) each bind L-ornithine. Residues 269–270 (CL) and arginine 297 contribute to the carbamoyl phosphate site.

This sequence belongs to the aspartate/ornithine carbamoyltransferase superfamily. OTCase family.

It localises to the cytoplasm. It catalyses the reaction carbamoyl phosphate + L-ornithine = L-citrulline + phosphate + H(+). It participates in amino-acid biosynthesis; L-arginine biosynthesis; L-arginine from L-ornithine and carbamoyl phosphate: step 1/3. In terms of biological role, reversibly catalyzes the transfer of the carbamoyl group from carbamoyl phosphate (CP) to the N(epsilon) atom of ornithine (ORN) to produce L-citrulline. This Symbiobacterium thermophilum (strain DSM 24528 / JCM 14929 / IAM 14863 / T) protein is Ornithine carbamoyltransferase.